The following is a 288-amino-acid chain: ATP synthase gamma chain (288 aa).

The protein belongs to the ATPase gamma chain family. As to quaternary structure, F-type ATPases have 2 components, CF(1) - the catalytic core - and CF(0) - the membrane proton channel. CF(1) has five subunits: alpha(3), beta(3), gamma(1), delta(1), epsilon(1). CF(0) has three main subunits: a, b and c.

It is found in the cell inner membrane. In terms of biological role, produces ATP from ADP in the presence of a proton gradient across the membrane. The gamma chain is believed to be important in regulating ATPase activity and the flow of protons through the CF(0) complex. This chain is ATP synthase gamma chain, found in Rickettsia canadensis (strain McKiel).